A 1107-amino-acid polypeptide reads, in one-letter code: Unconventional myosin-Ie (1107 aa).

Residues 19 to 692 enclose the Myosin motor domain; sequence SGVDDMVLLS…SLFLLEEMRE (674 aa). Position 112–119 (112–119) interacts with ATP; it reads GESGAGKT. The interval 581–591 is actin-binding; sequence PHYIRCIKPNE. The region spanning 695-724 is the IQ domain; that stretch reads YDGYARVIQKTWRKFVARKKYVQMREDASD. The 193-residue stretch at 730 to 922 folds into the TH1 domain; that stretch reads KERRRNSINR…NKVLQVSIGP (193 aa). The tract at residues 920 to 1052 is disordered; sequence IGPGLPKNAR…KPQPKPKPQV (133 aa). Composition is skewed to polar residues over residues 933–949, 977–989, and 998–1012; these read RNTV…NNNY, SGNQ…SLYT, and RQQS…QTPE. A Phosphoserine modification is found at serine 1001. A compositionally biased stretch (pro residues) spans 1034-1051; the sequence is RPPPAGGRPKPQPKPKPQ. The 58-residue stretch at 1050-1107 folds into the SH3 domain; that stretch reads PQVPQCKALYAYDAQDTDELSFNANDVIDIIKEDPSGWWTGRLRGKQGLFPNNYVTKI.

It belongs to the TRAFAC class myosin-kinesin ATPase superfamily. Myosin family. Interacts with CALM and F-actin. Interacts (via SH3 domain) with SYNJ1, DNM1 and DNM2. Interacts with ARL14EP. Interacts with CARMIL1. As to expression, detected in brain stem, brain cortex, cerebellum, stomach, colon, heart, lung, liver, spleen and kidney. Detected in utricle, cochlea, outer hair cell bundle cuticular plate and vestibular epithelia (at protein level). Detected in cochlea and vestibular tissues. Detected in kidney, lung, spleen and intestine.

It is found in the cytoplasm. The protein localises to the cytoskeleton. Its subcellular location is the cytoplasmic vesicle. It localises to the clathrin-coated vesicle. The protein resides in the cell junction. Its function is as follows. Myosins are actin-based motor molecules with ATPase activity. Unconventional myosins serve in intracellular movements. Their highly divergent tails bind to membranous compartments, which are then moved relative to actin filaments. Binds to membranes containing anionic phospholipids via its tail domain. Involved in clathrin-mediated endocytosis and intracellular movement of clathrin-coated vesicles. Required for normal morphology of the glomerular basement membrane, normal development of foot processes by kidney podocytes and normal kidney function. In dendritic cells, may control the movement of class II-containing cytoplasmic vesicles along the actin cytoskeleton by connecting them with the actin network via ARL14EP and ARL14. This chain is Unconventional myosin-Ie (Myo1e), found in Rattus norvegicus (Rat).